The primary structure comprises 223 residues: UPF0441 protein YgiB (223 aa).

The disordered stretch occupies residues 201 to 223 (ESVAKQSAMQRSAAGTSTRSMGG). A compositionally biased stretch (polar residues) spans 204–223 (AKQSAMQRSAAGTSTRSMGG).

Belongs to the UPF0441 family.

The protein is UPF0441 protein YgiB of Salmonella arizonae (strain ATCC BAA-731 / CDC346-86 / RSK2980).